A 597-amino-acid chain; its full sequence is MDHIRNFSIIAHIDHGKSTLADRIIQVCGGLADREMEAQVLDSMDIERERGITIKAQTAALSYRARDGKVYNLNLIDTPGHVDFSYEVSRSLSACEGALLVVDASQGVEAQTVANCYTAIELGVEVVPVLNKIDLPAANPENAIEEIEDVIGIDATDATRCSAKTGLGVEDVLESLIAKVPPPKGDPAAPLQALIIDSWFDNYVGVVMLVRIVNGTLRPKEKIKMMATGAQYPVEHVGVFTPKSRNLESLSAGQVGFIIAGIKELTAAKVGDTVTHVAKAASEPLPGFKEVKPQVFAGLYPVEANQYDALRESLEKLKLNDASLQYEPEVSQALGFGFRCGFLGLLHMEIVQERLEREFDMDLITTAPTVVYEVVQSDGSTIMVENPAKMPEPGRIAEVREPIVTVNLYMPQDYVGSVITLCEQKRGSQINMQYHGRQVQLTYEIPMAEIVLDFFDRLKSVSRGYASMDYEFKEYRSSDVVKVDMLINGDKVDALSIIVHRSQSQYRGREVAAKMREIIPRQMYDVAIQAAIGAHIVARENIKALRKNVLAKCYGGDITRKKKLLEKQKEGKKRMKQVGSVEIPQEAFLAILRVEDK.

The tr-type G domain occupies aspartate 2–lysine 184. GTP-binding positions include aspartate 14–threonine 19 and asparagine 131–aspartate 134.

Belongs to the TRAFAC class translation factor GTPase superfamily. Classic translation factor GTPase family. LepA subfamily.

It is found in the cell inner membrane. It catalyses the reaction GTP + H2O = GDP + phosphate + H(+). Required for accurate and efficient protein synthesis under certain stress conditions. May act as a fidelity factor of the translation reaction, by catalyzing a one-codon backward translocation of tRNAs on improperly translocated ribosomes. Back-translocation proceeds from a post-translocation (POST) complex to a pre-translocation (PRE) complex, thus giving elongation factor G a second chance to translocate the tRNAs correctly. Binds to ribosomes in a GTP-dependent manner. This Burkholderia ambifaria (strain MC40-6) protein is Elongation factor 4.